The chain runs to 170 residues: Thialysine N-epsilon-acetyltransferase (170 aa).

The N-acetyltransferase domain maps to 4–166 (VLIREAKEGD…FRFEGEAMRE (163 aa)). 27–28 (YE) lines the substrate pocket. At lysine 29 the chain carries N6-acetyllysine. Glutamate 92 is a substrate binding site. Acetyl-CoA is bound by residues 94 to 96 (IYV), 102 to 107 (GQGIGS), 133 to 135 (NKK), and tyrosine 140. Catalysis depends on tyrosine 140, which acts as the Proton donor. A substrate-binding site is contributed by glutamate 152.

Belongs to the acetyltransferase family. Homodimer.

The protein resides in the cytoplasm. The catalysed reaction is S-(2-aminoethyl)-L-cysteine + acetyl-CoA = S-(2-acetamidoethyl)-L-cysteine + CoA + H(+). It carries out the reaction an alkane-alpha,omega-diamine + acetyl-CoA = an N-acetylalkane-alpha,omega-diamine + CoA + H(+). Functionally, catalyzes the N-acetylation of the amino acid thialysine (S-(2-aminoethyl)-L-cysteine), a L-lysine analog with the 4-methylene group substituted with a sulfur. May also catalyze acetylation of polyamines, such as norspermidine, spermidine or spermine. However, ability to acetylate polyamines is weak, suggesting that it does not act as a diamine acetyltransferase in vivo. The protein is Thialysine N-epsilon-acetyltransferase of Sus scrofa (Pig).